Reading from the N-terminus, the 32-residue chain is Delta-conotoxin-like MVID (32 aa).

3 disulfide bridges follow: Cys-3/Cys-18, Cys-10/Cys-22, and Cys-17/Cys-27. A 4-hydroxyproline modification is found at Pro-14.

Belongs to the conotoxin O1 superfamily. In terms of tissue distribution, expressed by the venom duct.

The protein localises to the secreted. Its function is as follows. Delta-conotoxins bind to site 6 of voltage-gated sodium channels (Nav) and inhibit the inactivation process. This Conus magus (Magical cone) protein is Delta-conotoxin-like MVID.